A 346-amino-acid polypeptide reads, in one-letter code: Nicotinate-nucleotide--dimethylbenzimidazole phosphoribosyltransferase (346 aa).

Glu312 functions as the Proton acceptor in the catalytic mechanism.

This sequence belongs to the CobT family.

The enzyme catalyses 5,6-dimethylbenzimidazole + nicotinate beta-D-ribonucleotide = alpha-ribazole 5'-phosphate + nicotinate + H(+). The protein operates within nucleoside biosynthesis; alpha-ribazole biosynthesis; alpha-ribazole from 5,6-dimethylbenzimidazole: step 1/2. Catalyzes the synthesis of alpha-ribazole-5'-phosphate from nicotinate mononucleotide (NAMN) and 5,6-dimethylbenzimidazole (DMB). In Cupriavidus necator (strain ATCC 17699 / DSM 428 / KCTC 22496 / NCIMB 10442 / H16 / Stanier 337) (Ralstonia eutropha), this protein is Nicotinate-nucleotide--dimethylbenzimidazole phosphoribosyltransferase.